Here is a 344-residue protein sequence, read N- to C-terminus: MAP3K12-binding inhibitory protein 1 (344 aa).

Serine 91 is subject to Phosphoserine. Glycyl lysine isopeptide (Lys-Gly) (interchain with G-Cter in SUMO2) cross-links involve residues lysine 94, lysine 118, lysine 129, lysine 139, lysine 153, and lysine 235. Positions 172–344 (AEINENNVRE…AESMATHHLP (173 aa)) are interaction with MAP3K12. The interval 271 to 285 (IYQRIKKLEDKILEL) is leucine-zipper 1. An N6-acetyllysine; alternate modification is found at lysine 301. Lysine 301 participates in a covalent cross-link: Glycyl lysine isopeptide (Lys-Gly) (interchain with G-Cter in SUMO2); alternate. Glycyl lysine isopeptide (Lys-Gly) (interchain with G-Cter in SUMO2) cross-links involve residues lysine 304 and lysine 325. The interval 314-329 (LAELDEKISALKQALL) is leucine-zipper 2.

In terms of assembly, component of the ADA2A-containing complex (ATAC), composed of KAT14, KAT2A, TADA2L, TADA3L, ZZ3, MBIP, WDR5, YEATS2, CCDC101 and DR1. In the complex, it probably interacts directly with KAT2A, KAT14 and WDR5. In terms of tissue distribution, ubiquitous. High expression seen in the heart and lung.

It localises to the nucleus. It is found in the cytoplasm. Functionally, inhibits the MAP3K12 activity to induce the activation of the JNK/SAPK pathway. Component of the ATAC complex, a complex with histone acetyltransferase activity on histones H3 and H4. The chain is MAP3K12-binding inhibitory protein 1 (MBIP) from Homo sapiens (Human).